Consider the following 233-residue polypeptide: RNA-free ribonuclease P (233 aa).

This sequence belongs to the HARP family.

It carries out the reaction Endonucleolytic cleavage of RNA, removing 5'-extranucleotides from tRNA precursor.. Its function is as follows. RNA-free RNase P that catalyzes the removal of the 5'-leader sequence from pre-tRNA to produce the mature 5'-terminus. The protein is RNA-free ribonuclease P of Methanocaldococcus jannaschii (strain ATCC 43067 / DSM 2661 / JAL-1 / JCM 10045 / NBRC 100440) (Methanococcus jannaschii).